A 399-amino-acid polypeptide reads, in one-letter code: Argininosuccinate synthase (399 aa).

Residue 12–20 (AFSGGLDTS) participates in ATP binding. Tyrosine 90 is an L-citrulline binding site. Glycine 120 is a binding site for ATP. Residues threonine 122, asparagine 126, and aspartate 127 each coordinate L-aspartate. Asparagine 126 serves as a coordination point for L-citrulline. L-citrulline-binding residues include arginine 130, serine 175, glutamate 260, and tyrosine 272.

This sequence belongs to the argininosuccinate synthase family. Type 1 subfamily. Homotetramer.

It localises to the cytoplasm. The enzyme catalyses L-citrulline + L-aspartate + ATP = 2-(N(omega)-L-arginino)succinate + AMP + diphosphate + H(+). Its pathway is amino-acid biosynthesis; L-arginine biosynthesis; L-arginine from L-ornithine and carbamoyl phosphate: step 2/3. In Methanothermobacter thermautotrophicus (strain ATCC 29096 / DSM 1053 / JCM 10044 / NBRC 100330 / Delta H) (Methanobacterium thermoautotrophicum), this protein is Argininosuccinate synthase.